The primary structure comprises 158 residues: uncharacterized protein (158 aa).

The protein resides in the mitochondrion. This is an uncharacterized protein from Arabidopsis thaliana (Mouse-ear cress).